Reading from the N-terminus, the 3707-residue chain is CUB and sushi domain-containing protein 3 (3707 aa).

A compositionally biased stretch (basic and acidic residues) spans 1–21 (MKGSRKGESRAKESKPREPGT). Residues 1–22 (MKGSRKGESRAKESKPREPGTR) are disordered. Residues 1-42 (MKGSRKGESRAKESKPREPGTRRCAKCGRLDFILKKKMGIKS) lie on the Cytoplasmic side of the membrane. Residues 43-63 (GFTFWNLVFLLTLSCVKGFIY) traverse the membrane as a helical segment. Over 64 to 3630 (TCGGTLKGLN…NQPHGTNSSS (3567 aa)) the chain is Extracellular. Intrachain disulfides connect Cys-65–Cys-91, Cys-178–Cys-218, Cys-204–Cys-235, and Cys-241–Cys-267. The CUB 1 domain occupies 65–173 (CGGTLKGLNG…HGFKVYYEEL (109 aa)). N-linked (GlcNAc...) asparagine glycans are attached at residues Asn-73 and Asn-90. The Sushi 1 domain maps to 176-237 (SSCGNPGVPP…WDFPVPICRA (62 aa)). In terms of domain architecture, CUB 2 spans 241–345 (CGGTMRGSSG…RGFSAPYQGS (105 aa)). The interval 388 to 437 (HRLSEEQRVQVRSLSDSGLDPNTPEDQLSPHQADTQSTSRRPRNAEQIER) is disordered. Residues 411-426 (PEDQLSPHQADTQSTS) show a composition bias toward polar residues. The Sushi 2 domain occupies 484 to 545 (NLCPDPGEPE…WSDHRPVCKV (62 aa)). Intrachain disulfides connect Cys-486/Cys-526, Cys-512/Cys-543, Cys-548/Cys-574, Cys-664/Cys-704, Cys-690/Cys-717, and Cys-721/Cys-747. A CUB 3 domain is found at 548–659 (CGSNLQGPSG…VGFKVNYKEI (112 aa)). Positions 662-719 (ESCGDPGTPLYGIREGDGFSNRDVLRFECQFGFELIGEKSIVCQENNQWSANIPICIF) constitute a Sushi 3 domain. The CUB 4 domain occupies 721–829 (CLSNFTAPMG…RGFNITYNTF (109 aa)). 2 N-linked (GlcNAc...) asparagine glycosylation sites follow: Asn-724 and Asn-823. The region spanning 832–893 (NECPDPGIPI…WSGPIPRCGA (62 aa)) is the Sushi 4 domain. 3 cysteine pairs are disulfide-bonded: Cys-834/Cys-875, Cys-860/Cys-891, and Cys-895/Cys-921. Positions 895–1003 (CGGHFSAPSG…NGFKIHYESV (109 aa)) constitute a CUB 5 domain. Asn-966 carries an N-linked (GlcNAc...) asparagine glycan. Positions 1008-1065 (YSCLDPGIPVHGRRYGHDFSIGSTVSFSCDPGYRLSHEEPLLCEKNHWWSHPLPTCDA) constitute a Sushi 5 domain. Intrachain disulfides connect Cys-1010–Cys-1050, Cys-1036–Cys-1063, and Cys-1067–Cys-1093. Positions 1067-1177 (CGGDVRGPSG…EGFNITFSEY (111 aa)) constitute a CUB 6 domain. Residues Asn-1092, Asn-1126, and Asn-1171 are each glycosylated (N-linked (GlcNAc...) asparagine). The 60-residue stretch at 1180-1239 (EPCEDPGIPQYGSRVGFSFGVGDTLTFSCSLGYRLEGSSEIICLGGGRRVWSAPLPRCVA) folds into the Sushi 6 domain. 3 disulfide bridges follow: Cys-1182–Cys-1222, Cys-1208–Cys-1237, and Cys-1241–Cys-1267. Residues 1241–1349 (CGASATNNEG…EGFQLVYTSF (109 aa)) form the CUB 7 domain. Asn-1280 carries an N-linked (GlcNAc...) asparagine glycan. The 61-residue stretch at 1352–1412 (SHCEDPGIPQ…WDYPLPSCIA (61 aa)) folds into the Sushi 7 domain. Intrachain disulfides connect Cys-1354-Cys-1395, Cys-1381-Cys-1410, Cys-1414-Cys-1441, Cys-1528-Cys-1568, Cys-1554-Cys-1584, Cys-1588-Cys-1614, Cys-1701-Cys-1741, Cys-1727-Cys-1758, Cys-1762-Cys-1788, Cys-1878-Cys-1918, Cys-1904-Cys-1935, and Cys-1939-Cys-1965. A CUB 8 domain is found at 1414 to 1523 (CGGRFKGESS…SGFAIQFSSS (110 aa)). Positions 1526 to 1586 (TACRDPGVPM…WQPSPPVCIA (61 aa)) constitute a Sushi 8 domain. N-linked (GlcNAc...) asparagine glycosylation is present at Asn-1536. One can recognise a CUB 9 domain in the interval 1588–1696 (CGGNLTGSSG…TGFHLEYKAK (109 aa)). Residues Asn-1591 and Asn-1709 are each glycosylated (N-linked (GlcNAc...) asparagine). The Sushi 9 domain maps to 1699 to 1760 (ESCFDPGNIM…WNRVLPSCHA (62 aa)). In terms of domain architecture, CUB 10 spans 1762–1870 (CGSRSTGSEG…KGFHFVYQAV (109 aa)). The N-linked (GlcNAc...) asparagine glycan is linked to Asn-1781. A Sushi 10 domain is found at 1876 to 1937 (TQCSSVPEPR…WNDSLPTCIV (62 aa)). N-linked (GlcNAc...) asparagine glycosylation occurs at Asn-1929. One can recognise a CUB 11 domain in the interval 1939–2047 (CGGILTKRKG…AGFHLEYTAI (109 aa)). N-linked (GlcNAc...) asparagine glycosylation is present at Asn-2019. In terms of domain architecture, Sushi 11 spans 2050 to 2109 (DSCPEPQTPSSGIKVGDRYMVGDVVSFQCDQGYSLQGHSHITCMPGPVRRWNYPIPICLA). Cystine bridges form between Cys-2052-Cys-2092, Cys-2078-Cys-2107, and Cys-2111-Cys-2137. A CUB 12 domain is found at 2111–2219 (CGGAMSDFSG…QGFHIVYQAY (109 aa)). Residue Asn-2155 is glycosylated (N-linked (GlcNAc...) asparagine). The Sushi 12 domain occupies 2222 to 2281 (QSCPDPRPFRNGFVIGNDFTVGQTISFECFPGYTLIGNSALTCLHGVSRNWNHPLPRCEA). Intrachain disulfides connect Cys-2224–Cys-2264, Cys-2250–Cys-2279, Cys-2283–Cys-2309, Cys-2395–Cys-2437, Cys-2423–Cys-2452, Cys-2456–Cys-2484, Cys-2569–Cys-2610, Cys-2596–Cys-2627, Cys-2632–Cys-2674, Cys-2658–Cys-2689, Cys-2694–Cys-2739, Cys-2725–Cys-2754, Cys-2759–Cys-2799, Cys-2785–Cys-2812, Cys-2817–Cys-2857, Cys-2843–Cys-2870, Cys-2875–Cys-2915, Cys-2901–Cys-2928, Cys-2933–Cys-2977, Cys-2963–Cys-2990, Cys-2995–Cys-3035, Cys-3021–Cys-3048, Cys-3056–Cys-3096, Cys-3082–Cys-3109, Cys-3114–Cys-3155, Cys-3141–Cys-3168, Cys-3173–Cys-3215, Cys-3199–Cys-3228, Cys-3233–Cys-3273, Cys-3259–Cys-3286, Cys-3291–Cys-3331, Cys-3317–Cys-3344, Cys-3352–Cys-3393, Cys-3379–Cys-3406, Cys-3411–Cys-3453, and Cys-3438–Cys-3466. One can recognise a CUB 13 domain in the interval 2283–2394 (CGGNITAMNG…LSYHAYQLRV (112 aa)). Asn-2286 and Asn-2291 each carry an N-linked (GlcNAc...) asparagine glycan. In terms of domain architecture, Sushi 13 spans 2393–2454 (RVCQPPPPVP…MDGAPPVCQV (62 aa)). The CUB 14 domain maps to 2456–2567 (CPANELRLDS…KGFRIRYIAF (112 aa)). 15 consecutive Sushi domains span residues 2567–2629 (FYCS…ACQA), 2630–2691 (ISCG…RCVV), 2692–2756 (VTCP…YCQI), 2757–2814 (ISCG…RCLA), 2815–2872 (GHCG…SCVP), 2873–2930 (VSCG…VCKV), 2931–2992 (VNCS…ECIM), 2993–3050 (IDCG…HCSG), 3054–3111 (GTCG…ECKA), 3112–3170 (VQCG…NCTI), 3171–3230 (ISCG…TCRA), 3231–3288 (VTCS…QCLP), 3289–3346 (KFCG…HCIE), 3350–3408 (TSCE…ECIP), and 3409–3468 (HSCK…VCEA). Over residues 3052–3065 (TTGTCGDPGTPGHG) the composition is skewed to low complexity. Residues 3052–3071 (TTGTCGDPGTPGHGSRQESD) are disordered. Residues 3631–3651 (VAIAILVPFFALIFAGFGFYL) traverse the membrane as a helical segment. The Cytoplasmic portion of the chain corresponds to 3652–3707 (YKQRTAPKTQYTGCSVHENNNGQAAFENPMYDTNAKSVEGKAVRFDPNLNTVCTMV).

The protein belongs to the CSMD family. As to expression, expressed in the apical dendrites of postnatal hippocampal neurons (at protein level).

It localises to the cell membrane. Functionally, involved in dendrite development. This chain is CUB and sushi domain-containing protein 3 (Csmd3), found in Mus musculus (Mouse).